The following is a 271-amino-acid chain: Purine nucleoside phosphorylase 1 (271 aa).

Phosphate contacts are provided by residues serine 28, histidine 59, 79–81, and alanine 111; that span reads RFH. Serine 28 is modified (phosphoserine). Glutamate 191 lines the a purine D-ribonucleoside pocket. Serine 210 is a binding site for phosphate. Asparagine 233 lines the a purine D-ribonucleoside pocket.

It belongs to the PNP/MTAP phosphorylase family. As to quaternary structure, homotrimer.

It carries out the reaction a purine 2'-deoxy-D-ribonucleoside + phosphate = a purine nucleobase + 2-deoxy-alpha-D-ribose 1-phosphate. The protein operates within purine metabolism; purine nucleoside salvage. Functionally, the purine nucleoside phosphorylases catalyze the phosphorolytic breakdown of the N-glycosidic bond in the beta-(deoxy)ribonucleoside molecules, with the formation of the corresponding free purine bases and pentose-1-phosphate. Cleaves guanosine, inosine, 2'-deoxyguanosine and 2'-deoxyinosine. The chain is Purine nucleoside phosphorylase 1 (punA) from Bacillus subtilis (strain 168).